Here is a 318-residue protein sequence, read N- to C-terminus: Aspartate carbamoyltransferase catalytic subunit (318 aa).

Carbamoyl phosphate-binding residues include R54 and T55. Position 82 (K82) interacts with L-aspartate. Positions 104, 134, and 137 each coordinate carbamoyl phosphate. L-aspartate is bound by residues R174 and R230. Residues G271 and P272 each contribute to the carbamoyl phosphate site.

This sequence belongs to the aspartate/ornithine carbamoyltransferase superfamily. ATCase family. Heterododecamer (2C3:3R2) of six catalytic PyrB chains organized as two trimers (C3), and six regulatory PyrI chains organized as three dimers (R2).

The catalysed reaction is carbamoyl phosphate + L-aspartate = N-carbamoyl-L-aspartate + phosphate + H(+). The protein operates within pyrimidine metabolism; UMP biosynthesis via de novo pathway; (S)-dihydroorotate from bicarbonate: step 2/3. Its function is as follows. Catalyzes the condensation of carbamoyl phosphate and aspartate to form carbamoyl aspartate and inorganic phosphate, the committed step in the de novo pyrimidine nucleotide biosynthesis pathway. The sequence is that of Aspartate carbamoyltransferase catalytic subunit from Clavibacter sepedonicus (Clavibacter michiganensis subsp. sepedonicus).